The following is a 528-amino-acid chain: GMP synthase [glutamine-hydrolyzing] (528 aa).

Residues 13–204 (SIVILDFGSQ…VHNICRSKPD (192 aa)) form the Glutamine amidotransferase type-1 domain. C90 serves as the catalytic Nucleophile. Catalysis depends on residues H178 and E180. One can recognise a GMPS ATP-PPase domain in the interval 205 to 403 (WTTNTFIDEA…LGLPEEIVNR (199 aa)). Residue 232–238 (SGGVDSS) participates in ATP binding.

Homodimer.

It carries out the reaction XMP + L-glutamine + ATP + H2O = GMP + L-glutamate + AMP + diphosphate + 2 H(+). Its pathway is purine metabolism; GMP biosynthesis; GMP from XMP (L-Gln route): step 1/1. Functionally, catalyzes the synthesis of GMP from XMP. The protein is GMP synthase [glutamine-hydrolyzing] of Prochlorococcus marinus (strain SARG / CCMP1375 / SS120).